Here is a 105-residue protein sequence, read N- to C-terminus: MKYAIVEISGRQFWIETGKYYDFNRIPTELGKEITLNRVLLLNNEGEILIGKPYLESVTVKGKILEHLRGRKTLVYKMRPKKKTRKKQGHRQELTRVLIEEIKTN.

Belongs to the bacterial ribosomal protein bL21 family. As to quaternary structure, part of the 50S ribosomal subunit.

Its subcellular location is the plastid. It is found in the chloroplast. Functionally, this protein binds to 23S rRNA. This chain is Large ribosomal subunit protein bL21c, found in Trieres chinensis (Marine centric diatom).